The sequence spans 104 residues: L-rhamnose mutarotase (104 aa).

Tyr-18 serves as a coordination point for substrate. Catalysis depends on His-22, which acts as the Proton donor. Substrate-binding positions include Tyr-41 and 76–77 (WW).

Belongs to the rhamnose mutarotase family. In terms of assembly, homodimer.

The protein localises to the cytoplasm. It catalyses the reaction alpha-L-rhamnose = beta-L-rhamnose. Its pathway is carbohydrate metabolism; L-rhamnose metabolism. Its function is as follows. Involved in the anomeric conversion of L-rhamnose. The sequence is that of L-rhamnose mutarotase from Burkholderia ambifaria (strain MC40-6).